The primary structure comprises 1465 residues: Neuropathy target esterase sws (1465 aa).

Topologically, residues 1 to 34 are lumenal; the sequence is MDVLEMLRASASGSYNTIFSEAWCQYVSKQITAT. Residues 35-55 traverse the membrane as a helical segment; sequence MYMYCALGMMGVLFLAWFMYF. Residues 56–1465 lie on the Cytoplasmic side of the membrane; sequence KRMARLRLRD…RSSANNETKN (1410 aa). 174–301 is an a nucleoside 3',5'-cyclic phosphate binding site; it reads IFGHFEKPVF…IRVIQVIMIR (128 aa). Composition is skewed to polar residues over residues 331–349 and 434–454; these read STMSGPINSQTSQSSRQTP and QQSVGNLSTRRSSITQMTPDG. Disordered stretches follow at residues 331-421 and 434-460; these read STMS…TEVH and QQSVGNLSTRRSSITQMTPDGSHSCPP. Phosphoserine is present on residues Ser-446 and Ser-455. A nucleoside 3',5'-cyclic phosphate contacts are provided by residues 484 to 611 and 600 to 727; these read ELGL…VVRR and IVLD…LSHR. Residues 954 to 1120 form the PNPLA domain; sequence LVLGGGGARG…VNNLPGHLWR (167 aa). The GXGXXG motif lies at 958–963; it reads GGGARG. The GXSXG motif lies at 985–989; that stretch reads GVSIG. The active-site Nucleophile is Ser-987. Asp-1107 functions as the Proton acceptor in the catalytic mechanism. The DGA/G signature appears at 1107 to 1109; that stretch reads DGG. Position 1201 is a phosphoserine (Ser-1201). The tract at residues 1371 to 1465 is disordered; sequence LERKTDKSTQ…RSSANNETKN (95 aa). Residues 1378–1390 show a composition bias toward low complexity; sequence STQSSPPTSSRTS. The span at 1392–1402 shows a compositional bias: basic and acidic residues; sequence RGKEEARHMDN. Residues 1413–1424 show a composition bias toward polar residues; the sequence is TGSGATEGIHTS. The span at 1447–1456 shows a compositional bias: basic and acidic residues; the sequence is VYKDEDKENR.

The protein belongs to the NTE family. Interacts with Pka-C3; interaction inhibits the catalytic function of Pka-C3 and the esterase activity of sws.

The protein localises to the endoplasmic reticulum membrane. It catalyses the reaction a 1-acyl-sn-glycero-3-phosphocholine + H2O = sn-glycerol 3-phosphocholine + a fatty acid + H(+). Functionally, phospholipase B that deacylates intracellular phosphatidylcholine (PtdCho), generating glycerophosphocholine (GroPtdCho). This deacylation occurs at both sn-2 and sn-1 positions of PtdCho. Its specific chemical modification by certain organophosphorus (OP) compounds leads to distal axonopathy. Plays a role in the signaling mechanism between neurons and glia that regulates glia wrapping during development of the adult brain. Essential for membrane lipid homeostasis and cell survival in both neurons and glia of the adult brain. This chain is Neuropathy target esterase sws, found in Drosophila erecta (Fruit fly).